The sequence spans 458 residues: D-inositol 3-phosphate glycosyltransferase (458 aa).

Position 16 (H16) interacts with 1D-myo-inositol 3-phosphate. UDP-N-acetyl-alpha-D-glucosamine-binding positions include 22-23 (QP) and G30. 1D-myo-inositol 3-phosphate-binding positions include 27 to 32 (DAGGMN), K85, Y118, T142, and R162. R236, K241, and Q302 together coordinate UDP-N-acetyl-alpha-D-glucosamine. 3 residues coordinate Mg(2+): Y311, R312, and S314. Positions 324 and 332 each coordinate UDP-N-acetyl-alpha-D-glucosamine. T338 provides a ligand contact to Mg(2+). Positions 428–458 (VAAQNVTGSSSRTRRPWRRRRSTLLPMTGRS) are disordered. The segment covering 439-449 (RTRRPWRRRRS) has biased composition (basic residues).

It belongs to the glycosyltransferase group 1 family. MshA subfamily. As to quaternary structure, homodimer.

The enzyme catalyses 1D-myo-inositol 3-phosphate + UDP-N-acetyl-alpha-D-glucosamine = 1D-myo-inositol 2-acetamido-2-deoxy-alpha-D-glucopyranoside 3-phosphate + UDP + H(+). In terms of biological role, catalyzes the transfer of a N-acetyl-glucosamine moiety to 1D-myo-inositol 3-phosphate to produce 1D-myo-inositol 2-acetamido-2-deoxy-glucopyranoside 3-phosphate in the mycothiol biosynthesis pathway. This chain is D-inositol 3-phosphate glycosyltransferase, found in Gordonia bronchialis (strain ATCC 25592 / DSM 43247 / BCRC 13721 / JCM 3198 / KCTC 3076 / NBRC 16047 / NCTC 10667) (Rhodococcus bronchialis).